Consider the following 2343-residue polypeptide: Pecanex-like protein 1 (2343 aa).

2 helical membrane passes run 33 to 53 and 57 to 77; these read ALHL…YMAL and MIIV…LKMV. 4 disordered regions span residues 98-163, 271-290, 306-691, and 749-826; these read FTDQ…GSSR, SHSY…SSSA, QQQR…TRAR, and TRSR…QGQQ. The span at 143–163 shows a compositional bias: polar residues; that stretch reads SSRNSYAGLDPSNQIGSGSSR. Positions 272 to 282 are enriched in basic residues; that stretch reads HSYRKEHRPRG. Positions 372–390 are enriched in low complexity; it reads SLRSLSTRSSGSTESYCSG. The span at 396–412 shows a compositional bias: polar residues; it reads NSTLSSYKSEQTSSTHI. 3 stretches are compositionally biased toward basic and acidic residues: residues 416–457, 507–521, and 530–546; these read LSEH…DKTA, RPPE…EQGE, and KVCK…DVRP. Residues 556–571 are compositionally biased toward basic residues; that stretch reads TSAHKPGRRRTGKKRA. 3 stretches are compositionally biased toward low complexity: residues 624–637, 769–780, and 809–826; these read SDSS…SCQS, AATGAAQASEEA, and TLLI…QGQQ. 13 consecutive transmembrane segments (helical) span residues 978–998, 1009–1029, 1034–1054, 1068–1088, 1118–1138, 1162–1182, 1195–1215, 1268–1288, 1296–1316, 1406–1426, 1434–1454, 1458–1478, and 1493–1513; these read FWIL…LLAL, ILAV…LIQG, IWVF…LKSV, IIAY…WLLD, LVIV…LPQV, LLAA…LYGL, HIPV…YHLS, LVVC…TVFT, YVLY…LPQV, SFSS…FFKF, TMLL…ELLY, FVYT…HAFA, and AVVS…AIFI. A disordered region spans residues 2050 to 2120; that stretch reads EDSDTGGGTS…VQSSLVRQSP (71 aa). Composition is skewed to polar residues over residues 2060 to 2080 and 2094 to 2117; these read CPAN…QGST and PTTS…SLVR.

It belongs to the pecanex family. In terms of tissue distribution, specifically expressed in the germ line and not in the somatic cells of the testis, reaching its peak at the pachytene stage of the meiotic prophase. Detected in pachytene spermatocytes and round spermatids (at protein level).

It localises to the membrane. In Rattus norvegicus (Rat), this protein is Pecanex-like protein 1.